Reading from the N-terminus, the 628-residue chain is Nuclear receptor subfamily 4 group A member 3 (628 aa).

The tract at residues 1 to 112 is activation function (AF)-1 domain; sequence MPCVQAQYSP…HHHHHHHHHH (112 aa). The tract at residues 1-140 is required for DNA-PK heterotrimer; the sequence is MPCVQAQYSP…PSTSMYFKQS (140 aa). An interaction with NCOA1, NCOA2, NCOA3 and KAT2B region spans residues 1–293; the sequence is MPCVQAQYSP…NRSSSSGEGT (293 aa). 2 disordered regions span residues 96 to 163 and 269 to 290; these read HGYH…DELP and ASSLLGESPSLPSPPNRSSSSG. The span at 97-113 shows a compositional bias: basic residues; that stretch reads GYHHHHHHHHHHHHHHQ. Over residues 142-151 the composition is skewed to pro residues; sequence PSTPTTPGFP. Low complexity predominate over residues 270–289; it reads SSLLGESPSLPSPPNRSSSS. Positions 291–366 form a DNA-binding region, nuclear receptor; it reads EGTCAVCGDN…VGMVKEVVRT (76 aa). 2 consecutive NR C4-type zinc fingers follow at residues 294 to 314 and 330 to 354; these read CAVCGDNAACQHYGVRTCEGC and CLANKNCPVDKRRRNRCQYCRFQKC. Residues 366–396 form a disordered region; sequence TDSLKGRRGRLPSKPKSPLQQEPSQPSPPSP. The segment covering 379 to 389 has biased composition (low complexity); sequence KPKSPLQQEPS. The segment at 381-628 is interaction with KAT2B; it reads KSPLQQEPSQ…DKLFLDTLPF (248 aa). The NR LBD domain occupies 396–625; sequence PPICMMNALV…SVIDKLFLDT (230 aa).

It belongs to the nuclear hormone receptor family. NR4 subfamily. In terms of assembly, interacts with SIX3 (via homeobox); differentially regulates the transcriptional activities of NR4A3. Interacts with NR3C1 (via nuclear receptor DNA-binding domain); the interactions represses transcription activity of NR4A3 on the POMC promoter Nur response element (NurRE). Interacts with TRIM28; the interactions potentiates NR4A3 activity on NurRE promoter. Binds DNA as a monomer and homodimer. Interacts with PARP1; activates PARP1 by improving acetylation of PARP1 and suppressing the interaction between PARP1 and SIRT1. Interacts with the constituents of DNA-PK heterotrimer PRKDC, XRCC6 and XRCC5; phosphorylates and prevents NR4A3 ubiquitinylation and degradation. Interacts with NCOA2; potentiates the activity of the NR4A3. Interacts with NCOA1, NCOA3, MED1 and KAT2B. Interacts with EP300 and NCOA2; mediates the recruitment of MED1 in the coactivator complex. Post-translationally, phosphorylated by PRKDC. As to expression, expressed at high levels in cultured apoptotic neuronal cells and fetal brain, and at low level in adult brain.

The protein localises to the nucleus. Transcriptional activator that binds to regulatory elements in promoter regions in a cell- and response element (target)-specific manner. Induces gene expression by binding as monomers to the NR4A1 response element (NBRE) 5'-AAAAGGTCA-3' site and as homodimers to the Nur response element (NurRE) site in the promoter of their regulated target genes. Plays a role in the regulation of proliferation, survival and differentiation of many different cell types and also in metabolism and inflammation. Mediates proliferation of vascular smooth muscle, myeloid progenitor cell and type B pancreatic cells; promotes mitogen-induced vascular smooth muscle cell proliferation through transactivation of SKP2 promoter by binding a NBRE site. Upon PDGF stimulation, stimulates vascular smooth muscle cell proliferation by regulating CCND1 and CCND2 expression. In islets, induces type B pancreatic cell proliferation through up-regulation of genes that activate cell cycle, as well as genes that cause degradation of the CDKN1A. Negatively regulates myeloid progenitor cell proliferation by repressing RUNX1 in a NBRE site-independent manner. During inner ear, plays a role as a key mediator of the proliferative growth phase of semicircular canal development. Also mediates survival of neuron and smooth muscle cells; mediates CREB-induced neuronal survival, and during hippocampus development, plays a critical role in pyramidal cell survival and axonal guidance. Is required for S phase entry of the cell cycle and survival of smooth muscle cells by inducing CCND1, resulting in RB1 phosphorylation. Binds to NBRE motif in CCND1 promoter, resulting in the activation of the promoter and CCND1 transcription. Also plays a role in inflammation; Upon TNF stimulation, mediates monocyte adhesion by inducing the expression of VCAM1 and ICAM1 by binding to the NBRE consensus site. In mast cells activated by Fc-epsilon receptor cross-linking, promotes the synthesis and release of cytokines but impairs events leading to degranulation. Also plays a role in metabolism; by modulating feeding behavior; and by playing a role in energy balance by inhibiting the glucocorticoid-induced orexigenic neuropeptides AGRP expression, at least in part by forming a complex with activated NR3C1 on the AGRP-glucocorticoid response element (GRE), and thus weakening the DNA binding activity of NR3C1. Upon catecholamines stimulation, regulates gene expression that controls oxidative metabolism in skeletal muscle. Plays a role in glucose transport by regulating translocation of the SLC2A4 glucose transporter to the cell surface. Finally, during gastrulation plays a crucial role in the formation of anterior mesoderm by controlling cell migration. Also participates in cardiac hypertrophy by activating PARP1. In Rattus norvegicus (Rat), this protein is Nuclear receptor subfamily 4 group A member 3 (Nr4a3).